Consider the following 210-residue polypeptide: dTTP/UTP pyrophosphatase (210 aa).

Residue Asp89 is the Proton acceptor of the active site.

This sequence belongs to the Maf family. YhdE subfamily. It depends on a divalent metal cation as a cofactor.

It localises to the cytoplasm. The enzyme catalyses dTTP + H2O = dTMP + diphosphate + H(+). It catalyses the reaction UTP + H2O = UMP + diphosphate + H(+). Its function is as follows. Nucleoside triphosphate pyrophosphatase that hydrolyzes dTTP and UTP. May have a dual role in cell division arrest and in preventing the incorporation of modified nucleotides into cellular nucleic acids. The chain is dTTP/UTP pyrophosphatase from Burkholderia orbicola (strain AU 1054).